We begin with the raw amino-acid sequence, 140 residues long: Nucleoside diphosphate kinase (140 aa).

ATP is bound by residues Lys-9, Phe-57, Arg-85, Thr-91, Arg-102, and Asn-112. His-115 acts as the Pros-phosphohistidine intermediate in catalysis.

Belongs to the NDK family. Homotetramer. The cofactor is Mg(2+).

It is found in the cytoplasm. It catalyses the reaction a 2'-deoxyribonucleoside 5'-diphosphate + ATP = a 2'-deoxyribonucleoside 5'-triphosphate + ADP. It carries out the reaction a ribonucleoside 5'-diphosphate + ATP = a ribonucleoside 5'-triphosphate + ADP. Major role in the synthesis of nucleoside triphosphates other than ATP. The ATP gamma phosphate is transferred to the NDP beta phosphate via a ping-pong mechanism, using a phosphorylated active-site intermediate. The chain is Nucleoside diphosphate kinase from Chlorobium luteolum (strain DSM 273 / BCRC 81028 / 2530) (Pelodictyon luteolum).